The sequence spans 273 residues: 2,3,4,5-tetrahydropyridine-2,6-dicarboxylate N-succinyltransferase (273 aa).

The substrate site is built by Arg104 and Asp141.

This sequence belongs to the transferase hexapeptide repeat family. As to quaternary structure, homotrimer.

Its subcellular location is the cytoplasm. It carries out the reaction (S)-2,3,4,5-tetrahydrodipicolinate + succinyl-CoA + H2O = (S)-2-succinylamino-6-oxoheptanedioate + CoA. Its pathway is amino-acid biosynthesis; L-lysine biosynthesis via DAP pathway; LL-2,6-diaminopimelate from (S)-tetrahydrodipicolinate (succinylase route): step 1/3. This chain is 2,3,4,5-tetrahydropyridine-2,6-dicarboxylate N-succinyltransferase, found in Psychrobacter cryohalolentis (strain ATCC BAA-1226 / DSM 17306 / VKM B-2378 / K5).